We begin with the raw amino-acid sequence, 61 residues long: Keratin-associated protein 8-1 (61 aa).

Residues 13–49 (GCYWGSYGYPLGYSVGCGYGSTYSPVGYGLGYGYNGC) are 11 X 2 AA repeats of G-[YCGS].

This sequence belongs to the KRTAP type 8 family. As to quaternary structure, interacts with hair keratins. Expression restricted exclusively to the cortical cells of hair follicles.

Its function is as follows. In the hair cortex, hair keratin intermediate filaments are embedded in an interfilamentous matrix, consisting of hair keratin-associated proteins (KRTAP), which are essential for the formation of a rigid and resistant hair shaft through their extensive disulfide bond cross-linking with abundant cysteine residues of hair keratins. The matrix proteins include the high-sulfur and high-glycine-tyrosine keratins. This Mus musculus (Mouse) protein is Keratin-associated protein 8-1 (Krtap8-1).